The chain runs to 360 residues: Photosystem II protein D1 3 (360 aa).

3 helical membrane-spanning segments follow: residues 29 to 46 (YVGW…TAAI), 118 to 133 (HFLI…QWEL), and 142 to 156 (WIPV…AATA). Residue His118 participates in chlorophyll a binding. Tyr126 serves as a coordination point for pheophytin a. The [CaMn4O5] cluster site is built by Asp170 and Glu189. A helical membrane pass occupies residues 197–218 (FHMIGVAGVFGGALFSAMHGSL). His198 is a chlorophyll a binding site. A quinone contacts are provided by residues His215 and 264-265 (SF). His215 lines the Fe cation pocket. His272 contacts Fe cation. The helical transmembrane segment at 274–288 (FLAAWPVIGIWFAAL) threads the bilayer. [CaMn4O5] cluster is bound by residues His332, Glu333, Asp342, and Ala344. The propeptide occupies 345–360 (SGEVQPIALTAPAIAS).

It belongs to the reaction center PufL/M/PsbA/D family. As to quaternary structure, PSII is composed of 1 copy each of membrane proteins PsbA, PsbB, PsbC, PsbD, PsbE, PsbF, PsbH, PsbI, PsbJ, PsbK, PsbL, PsbM, PsbT, PsbX, PsbY, PsbZ, Psb30/Ycf12, peripheral proteins PsbO, CyanoQ (PsbQ), PsbU, PsbV and a large number of cofactors. It forms dimeric complexes. It depends on The D1/D2 heterodimer binds P680, chlorophylls that are the primary electron donor of PSII, and subsequent electron acceptors. It shares a non-heme iron and each subunit binds pheophytin, quinone, additional chlorophylls, carotenoids and lipids. D1 provides most of the ligands for the Mn4-Ca-O5 cluster of the oxygen-evolving complex (OEC). There is also a Cl(-1) ion associated with D1 and D2, which is required for oxygen evolution. The PSII complex binds additional chlorophylls, carotenoids and specific lipids. as a cofactor. In terms of processing, tyr-161 forms a radical intermediate that is referred to as redox-active TyrZ, YZ or Y-Z. Post-translationally, C-terminally processed by CtpA; processing is essential to allow assembly of the oxygen-evolving complex and thus photosynthetic growth.

Its subcellular location is the cellular thylakoid membrane. It carries out the reaction 2 a plastoquinone + 4 hnu + 2 H2O = 2 a plastoquinol + O2. Its function is as follows. Photosystem II (PSII) is a light-driven water:plastoquinone oxidoreductase that uses light energy to abstract electrons from H(2)O, generating O(2) and a proton gradient subsequently used for ATP formation. It consists of a core antenna complex that captures photons, and an electron transfer chain that converts photonic excitation into a charge separation. The D1/D2 (PsbA/PsbD) reaction center heterodimer binds P680, the primary electron donor of PSII as well as several subsequent electron acceptors. This is Photosystem II protein D1 3 from Nostoc sp. (strain PCC 7120 / SAG 25.82 / UTEX 2576).